Here is a 135-residue protein sequence, read N- to C-terminus: Putative hydrolase EbsB (135 aa).

One can recognise an RNase H type-1 domain in the interval 1–128 (MLRIYVDAAT…ADMLARQALQ (128 aa)). Mg(2+) contacts are provided by aspartate 7, glutamate 45, aspartate 71, and aspartate 120.

This sequence belongs to the RNase H family. EbsB subfamily. Requires Mg(2+) as cofactor.

The protein localises to the secreted. It is found in the cell wall. Functionally, seems to play some role in the cell surface expression of a chromosomally encoded receptor, named enterococcal binding substance (EBS), that mediates mating aggregate formation. Might interfere with the synthesis or assembly of EBS and function as a cell wall hydrolase. This chain is Putative hydrolase EbsB, found in Enterococcus faecalis (strain ATCC 700802 / V583).